Reading from the N-terminus, the 629-residue chain is DNA mismatch repair protein MutL (629 aa).

Belongs to the DNA mismatch repair MutL/HexB family.

This protein is involved in the repair of mismatches in DNA. It is required for dam-dependent methyl-directed DNA mismatch repair. May act as a 'molecular matchmaker', a protein that promotes the formation of a stable complex between two or more DNA-binding proteins in an ATP-dependent manner without itself being part of a final effector complex. In Haemophilus influenzae (strain PittGG), this protein is DNA mismatch repair protein MutL.